The sequence spans 99 residues: NADH dehydrogenase [ubiquinone] 1 alpha subcomplex subunit 2 (99 aa).

At alanine 2 the chain carries N-acetylalanine. A disulfide bridge links cysteine 24 with cysteine 58. Lysine 64 carries the N6-acetyllysine; alternate modification. The residue at position 64 (lysine 64) is an N6-succinyllysine; alternate. An N6-acetyllysine modification is found at lysine 75.

It belongs to the complex I NDUFA2 subunit family. As to quaternary structure, complex I is composed of 45 different subunits.

Its subcellular location is the mitochondrion inner membrane. In terms of biological role, accessory subunit of the mitochondrial membrane respiratory chain NADH dehydrogenase (Complex I), that is believed not to be involved in catalysis. Complex I functions in the transfer of electrons from NADH to the respiratory chain. The immediate electron acceptor for the enzyme is believed to be ubiquinone. This chain is NADH dehydrogenase [ubiquinone] 1 alpha subcomplex subunit 2 (NDUFA2), found in Bos taurus (Bovine).